Reading from the N-terminus, the 344-residue chain is Heat-inducible transcription repressor HrcA (344 aa).

Belongs to the HrcA family.

In terms of biological role, negative regulator of class I heat shock genes (grpE-dnaK-dnaJ and groELS operons). Prevents heat-shock induction of these operons. The polypeptide is Heat-inducible transcription repressor HrcA (Streptococcus agalactiae serotype III (strain NEM316)).